A 196-amino-acid polypeptide reads, in one-letter code: Nucleoid occlusion factor SlmA (196 aa).

In terms of domain architecture, HTH tetR-type spans 7–68 (TNRREEILQA…GLIEFIEEAL (62 aa)). Positions 31–50 (TTAKLAKQVGVSEAALYRHF) form a DNA-binding region, H-T-H motif. A coiled-coil region spans residues 110 to 142 (HALMFENERLRDRINQLFERIETQLRQILRERK).

Belongs to the nucleoid occlusion factor SlmA family. Homodimer. Interacts with FtsZ.

The protein localises to the cytoplasm. It is found in the nucleoid. Required for nucleoid occlusion (NO) phenomenon, which prevents Z-ring formation and cell division over the nucleoid. Acts as a DNA-associated cell division inhibitor that binds simultaneously chromosomal DNA and FtsZ, and disrupts the assembly of FtsZ polymers. SlmA-DNA-binding sequences (SBS) are dispersed on non-Ter regions of the chromosome, preventing FtsZ polymerization at these regions. In Vibrio campbellii (strain ATCC BAA-1116), this protein is Nucleoid occlusion factor SlmA.